We begin with the raw amino-acid sequence, 143 residues long: Small ribosomal subunit protein eS12 (143 aa).

This sequence belongs to the eukaryotic ribosomal protein eS12 family. Component of the small ribosomal subunit. Mature ribosomes consist of a small (40S) and a large (60S) subunit. The 40S subunit contains about 32 different proteins and 1 molecule of RNA (18S). The 60S subunit contains 45 different proteins and 3 molecules of RNA (25S, 5.8S and 5S).

Its subcellular location is the cytoplasm. In terms of biological role, component of the ribosome, a large ribonucleoprotein complex responsible for the synthesis of proteins in the cell. The small ribosomal subunit (SSU) binds messenger RNAs (mRNAs) and translates the encoded message by selecting cognate aminoacyl-transfer RNA (tRNA) molecules. The large subunit (LSU) contains the ribosomal catalytic site termed the peptidyl transferase center (PTC), which catalyzes the formation of peptide bonds, thereby polymerizing the amino acids delivered by tRNAs into a polypeptide chain. The nascent polypeptides leave the ribosome through a tunnel in the LSU and interact with protein factors that function in enzymatic processing, targeting, and the membrane insertion of nascent chains at the exit of the ribosomal tunnel. The polypeptide is Small ribosomal subunit protein eS12 (RPS12) (Candida albicans (strain SC5314 / ATCC MYA-2876) (Yeast)).